We begin with the raw amino-acid sequence, 465 residues long: MGPLKAFLFSPFLLRSQSRGVRLVFLLLTLHLGNCVDKADDEDDEDLTVNKTWVLAPKIHEGDITQILNSLLQGYDNKLRPDIGVRPTVIETDVYVNSIGPVDPINMEYTIDIIFAQTWFDSRLKFNSTMKVLMLNSNMVGKIWIPDTFFRNSRKSDAHWITTPNRLLRIWNDGRVLYTLRLTINAECYLQLHNFPMDEHSCPLEFSSYGYPKNEIEYKWKKPSVEVADPKYWRLYQFAFVGLRNSTEITHTISGDYVIMTIFFDLSRRMGYFTIQTYIPCILTVVLSWVSFWINKDAVPARTSLGITTVLTMTTLSTIARKSLPKVSYVTAMDLFVSVCFIFVFAALMEYGTLHYFTSNQKGKTATKDRKLKNKASMTPGLHPGSTLIPMNNISVPQEDDYGYQCLEGKDCASFFCCFEDCRTGSWREGRIHIRIAKIDSYSRIFFPTAFALFNLVYWVGYLYL.

Residues 1 to 35 (MGPLKAFLFSPFLLRSQSRGVRLVFLLLTLHLGNC) form the signal peptide. At 36 to 273 (VDKADDEDDE…FDLSRRMGYF (238 aa)) the chain is on the extracellular side. N-linked (GlcNAc...) asparagine glycosylation is found at N50 and N127. A disulfide bridge connects residues C188 and C202. N-linked (GlcNAc...) asparagine glycosylation occurs at N245. A helical transmembrane segment spans residues 274–294 (TIQTYIPCILTVVLSWVSFWI). Over 295 to 300 (NKDAVP) the chain is Cytoplasmic. A helical transmembrane segment spans residues 301–320 (ARTSLGITTVLTMTTLSTIA). Topologically, residues 321–328 (RKSLPKVS) are extracellular. A helical transmembrane segment spans residues 329 to 349 (YVTAMDLFVSVCFIFVFAALM). At 350-444 (EYGTLHYFTS…RIAKIDSYSR (95 aa)) the chain is on the cytoplasmic side. A helical transmembrane segment spans residues 445-465 (IFFPTAFALFNLVYWVGYLYL).

It belongs to the ligand-gated ion channel (TC 1.A.9) family. Gamma-aminobutyric acid receptor (TC 1.A.9.5) subfamily. GABRG1 sub-subfamily. As to quaternary structure, heteropentamer, formed by a combination of alpha (GABRA1-6), beta (GABRB1-3), gamma (GABRG1-3), delta (GABRD), epsilon (GABRE), rho (GABRR1-3), pi (GABRP) and theta (GABRQ) chains, each subunit exhibiting distinct physiological and pharmacological properties. May be palmitoylated.

The protein localises to the postsynaptic cell membrane. The protein resides in the cell membrane. It carries out the reaction chloride(in) = chloride(out). Its function is as follows. Gamma subunit of the heteropentameric ligand-gated chloride channel gated by gamma-aminobutyric acid (GABA), a major inhibitory neurotransmitter in the brain. GABA-gated chloride channels, also named GABA(A) receptors (GABAAR), consist of five subunits arranged around a central pore and contain GABA active binding site(s) located at the alpha and beta subunit interface(s). When activated by GABA, GABAARs selectively allow the flow of chloride anions across the cell membrane down their electrochemical gradient. Chloride influx into the postsynaptic neuron following GABAAR opening decreases the neuron ability to generate a new action potential, thereby reducing nerve transmission. This Homo sapiens (Human) protein is Gamma-aminobutyric acid receptor subunit gamma-1.